The primary structure comprises 391 residues: E1B 55 kDa protein (391 aa).

S387 is subject to Phosphoserine.

It belongs to the adenoviridae E1B 55 kDa protein family. As to quaternary structure, interacts with host PML-4 and PML-5; this interaction promotes efficient subnuclear targeting of E1B-55K to PML nuclear bodies. Interacts with E4-ORF3 protein. Interacts with E4-ORF6 protein.

It localises to the host nucleus. It is found in the host cytoplasm. In terms of biological role, plays a major role to prevent cellular inhibition of viral genome replication. Assembles an SCF-like E3 ubiquitin ligase complex based on the cellular proteins ELOB, ELOC, CUL5 and RBX1, in cooperation with viral E4orf6. This viral RING-type ligase ubiquitinates cellular substrates and targets them to proteasomal degradation: TP53/p53, LIG4, MRE11-RAD50-NBS1 (MRN) complex, ITGA3, DAXX and BLM. E1B-55K probably acts as the substrate-specific adapter of the SCF-like E3 ubiquitin ligase complex. Degradation of host TP53/p53 activity is essential for preventing E1A-induced TP53 accumulation that would otherwise lead to cell apoptosis and growth arrest. E1B-55K also inactivates TP53 transcription-factor activity by binding its transactivation domain. E1B-55K also functions as a SUMO1 E3 ligase for TP53 which causes the latter to be sequestered in promyelocytic leukemia (PML) nuclear bodies thereby contributing to maximal inhibition of TP53 function. The protein is E1B 55 kDa protein of Tree shrew adenovirus serotype 1 (TSAdV-1).